We begin with the raw amino-acid sequence, 343 residues long: Insertion element IS630 uncharacterized 39 kDa protein (343 aa).

This chain is Insertion element IS630 uncharacterized 39 kDa protein, found in Shigella sonnei.